Here is a 305-residue protein sequence, read N- to C-terminus: J domain-containing protein 1 (305 aa).

Positions 91–163 (TPYEVLGLVK…SRRRMYDMYA (73 aa)) constitute a J domain. The chain crosses the membrane as a helical span at residues 212-232 (WGMVVWALCMLAGFQVMAFLI).

Belongs to the DnaJ family.

It is found in the mitochondrion membrane. In terms of biological role, probable chaperone. In Eremothecium gossypii (strain ATCC 10895 / CBS 109.51 / FGSC 9923 / NRRL Y-1056) (Yeast), this protein is J domain-containing protein 1 (JID1).